Reading from the N-terminus, the 339-residue chain is Glycerol-3-phosphate dehydrogenase [NAD(P)+] (339 aa).

S15, Y16, H36, and K110 together coordinate NADPH. 3 residues coordinate sn-glycerol 3-phosphate: K110, G139, and T141. Residue A143 coordinates NADPH. K195, D248, S258, R259, and N260 together coordinate sn-glycerol 3-phosphate. K195 acts as the Proton acceptor in catalysis. R259 contributes to the NADPH binding site. Positions 283 and 285 each coordinate NADPH.

Belongs to the NAD-dependent glycerol-3-phosphate dehydrogenase family.

The protein resides in the cytoplasm. The enzyme catalyses sn-glycerol 3-phosphate + NAD(+) = dihydroxyacetone phosphate + NADH + H(+). The catalysed reaction is sn-glycerol 3-phosphate + NADP(+) = dihydroxyacetone phosphate + NADPH + H(+). It participates in membrane lipid metabolism; glycerophospholipid metabolism. Functionally, catalyzes the reduction of the glycolytic intermediate dihydroxyacetone phosphate (DHAP) to sn-glycerol 3-phosphate (G3P), the key precursor for phospholipid synthesis. The sequence is that of Glycerol-3-phosphate dehydrogenase [NAD(P)+] from Erwinia tasmaniensis (strain DSM 17950 / CFBP 7177 / CIP 109463 / NCPPB 4357 / Et1/99).